The following is a 206-amino-acid chain: Ribonuclease HII (206 aa).

The RNase H type-2 domain occupies 14–206 (ALVCGIDEAG…FRLRQLGEKP (193 aa)). Positions 20, 21, and 117 each coordinate a divalent metal cation.

It belongs to the RNase HII family. The cofactor is Mn(2+). Requires Mg(2+) as cofactor.

It localises to the cytoplasm. It carries out the reaction Endonucleolytic cleavage to 5'-phosphomonoester.. Endonuclease that specifically degrades the RNA of RNA-DNA hybrids. The polypeptide is Ribonuclease HII (Pelodictyon phaeoclathratiforme (strain DSM 5477 / BU-1)).